Here is a 430-residue protein sequence, read N- to C-terminus: DNA-binding protein cre-1 (430 aa).

Residues 1–19 show a composition bias toward polar residues; it reads MQRVQSAVDFSNLLNPSES. Disordered stretches follow at residues 1 to 77, 97 to 187, 265 to 340, and 357 to 430; these read MQRV…LPRP, IRTH…PHSY, SRSH…RNLS, and LDGQ…MDRL. The span at 30-46 shows a compositional bias: low complexity; the sequence is PRQQTAQPQQQQQQPQP. C2H2-type zinc fingers lie at residues 78 to 100 and 106 to 130; these read YKCP…IRTH and HACQ…SRIH. The segment covering 97–106 has biased composition (basic and acidic residues); the sequence is IRTHTGEKPH. Polar residues-rich tracts occupy residues 130 to 147 and 175 to 187; these read HSNP…QQQH and AMSS…PHSY. Basic and acidic residues predominate over residues 268-277; it reads HSHEDHDDHY. The segment covering 289 to 303 has biased composition (low complexity); the sequence is PNSPNSTAPSSPTFS. Polar residues predominate over residues 412–422; the sequence is SVRNSSSTSLS.

The protein belongs to the creA/MIG C2H2-type zinc-finger protein family.

Its subcellular location is the nucleus. Its function is as follows. Involved in carbon catabolite repression. Represses the transcription of a number of genes by binding to a GC-rich region in their promoter. In Neurospora crassa (strain ATCC 24698 / 74-OR23-1A / CBS 708.71 / DSM 1257 / FGSC 987), this protein is DNA-binding protein cre-1 (cre-1).